A 214-amino-acid chain; its full sequence is Urease accessory protein UreE (214 aa).

Positions 163–214 are disordered; it reads NAEPSGVDHSHEATDSGHGYGEDHDHDHSHDHNHDHDHNHDHDHSHSHDSHE. The segment covering 168 to 214 has biased composition (basic and acidic residues); that stretch reads GVDHSHEATDSGHGYGEDHDHDHSHDHNHDHDHNHDHDHSHSHDSHE.

Belongs to the UreE family.

The protein resides in the cytoplasm. Functionally, involved in urease metallocenter assembly. Binds nickel. Probably functions as a nickel donor during metallocenter assembly. This chain is Urease accessory protein UreE, found in Natronomonas pharaonis (strain ATCC 35678 / DSM 2160 / CIP 103997 / JCM 8858 / NBRC 14720 / NCIMB 2260 / Gabara) (Halobacterium pharaonis).